Reading from the N-terminus, the 445-residue chain is Neuropeptide Y receptor type 5 (445 aa).

At 1 to 42 (MDLELDEYYNKTLATENNTAATRNSDFPVWDDYKSSVDDLQY) the chain is on the extracellular side. N-linked (GlcNAc...) asparagine glycans are attached at residues N10 and N17. The helical transmembrane segment at 43-63 (FLIGLYTFVSLLGFMGNLLIL) threads the bilayer. At 64 to 77 (MALMKKRNQKTTVN) the chain is on the cytoplasmic side. A helical transmembrane segment spans residues 78-98 (FLIGNLAFSDILVVLFCSPFT). Residues 99 to 117 (LTSVLLDQWMFGKVMCHIM) are Extracellular-facing. Residues C114 and C198 are joined by a disulfide bond. Residues 118–138 (PFLQCVSVLVSTLILISIAIV) traverse the membrane as a helical segment. The Cytoplasmic portion of the chain corresponds to 139–156 (RYHMIKHPISNNLTANHG). The chain crosses the membrane as a helical span at residues 157 to 177 (YFLIATVWTLGFAICSPLPVF). Residues 178–208 (HSLVELQETFGSALLSSRYLCVESWPSDSYR) are Extracellular-facing. Residues 209-229 (IAFTISLLLVQYILPLVCLTV) form a helical membrane-spanning segment. The Cytoplasmic portion of the chain corresponds to 230–369 (SHTSVCRSIS…KKRSRSVFYR (140 aa)). Residues 370–390 (LTILILVFAVSWMPLHLFHVV) traverse the membrane as a helical segment. Topologically, residues 391 to 407 (TDFNDNLISNRHFKLVY) are extracellular. Residues 408 to 428 (CICHLLGMMSCCLNPILYGFL) form a helical membrane-spanning segment. Topologically, residues 429–445 (NNGIKADLVSLIHCLHM) are cytoplasmic. A lipid anchor (S-palmitoyl cysteine) is attached at C442.

It belongs to the G-protein coupled receptor 1 family. As to expression, brain; hypothalamus.

Its subcellular location is the cell membrane. Functionally, receptor for neuropeptide Y and peptide YY. The activity of this receptor is mediated by G proteins that inhibit adenylate cyclase activity. Seems to be associated with food intake. Could be involved in feeding disorders. The protein is Neuropeptide Y receptor type 5 (NPY5R) of Homo sapiens (Human).